The following is a 534-amino-acid chain: Flavonoid-6-hydroxylase (534 aa).

The helical transmembrane segment at 3-23 (FISFVYTLIAFSSLLYFYLIW) threads the bilayer. C467 provides a ligand contact to heme.

The protein belongs to the cytochrome P450 family. Heme serves as cofactor. In terms of tissue distribution, expressed in leaves.

It is found in the membrane. The enzyme catalyses genkwanin + reduced [NADPH--hemoprotein reductase] + O2 = scutellarein 7-methyl ether + oxidized [NADPH--hemoprotein reductase] + H2O. It catalyses the reaction (2S)-sakuranetin + reduced [NADPH--hemoprotein reductase] + O2 = (2S)-7-methylcarthamidin + oxidized [NADPH--hemoprotein reductase] + H2O + H(+). It carries out the reaction apigenin 4',7-dimethyl ether + reduced [NADPH--hemoprotein reductase] + O2 = ladanein + oxidized [NADPH--hemoprotein reductase] + H2O + H(+). The catalysed reaction is (2S)-naringenin 4',7-dimethyl ether + reduced [NADPH--hemoprotein reductase] + O2 = (2S)-carthamidin-4',7-dimethyl ether + oxidized [NADPH--hemoprotein reductase] + H2O + H(+). Its pathway is flavonoid metabolism. In terms of biological role, hydroxylase involved in the biosynthesis of polymethoxylated flavonoids natural products such as nevadensin and salvigenin, aroma compounds which contribute to the flavor of sweet basil, and exhibit pharmacological activities such as anti-allergic, anti-oxidant, antibacterial, anti-proliferative, and anti-inflammatory effects. Catalyzes the 6-hydroxylation of 7-O-methylated precursors such as the conversion of genkwanin (GENK) to scutellarein-7-methyl ether (SCU7Me). Can also use, with a lower efficiency, apigenin-7,4'-dimethyl ether (AdM), naringenin-7-methyl ether (SAK) and naringenin-7,4'-dimethyl ether (NdM) as substrates. The polypeptide is Flavonoid-6-hydroxylase (Ocimum basilicum (Sweet basil)).